The primary structure comprises 226 residues: uncharacterized protein (226 aa).

An N-terminal signal peptide occupies residues M1–S18.

This is an uncharacterized protein from Bacillus subtilis (strain 168).